Reading from the N-terminus, the 253-residue chain is Maleate isomerase (253 aa).

Substrate contacts are provided by residues Asn14, 80 to 82, Tyr137, and Asn167; that span reads CLV. Cys80 functions as the Nucleophile in the catalytic mechanism. The residue at position 80 (Cys80) is an S-(2-succinyl)cysteine. Cys198 serves as the catalytic Proton donor. 199 to 200 provides a ligand contact to substrate; that stretch reads VQ.

Belongs to the maleate isomerase family. As to quaternary structure, homodimer.

The enzyme catalyses maleate = fumarate. Catalyzes cis-trans isomerization of the C2-C3 double bond in maleate to yield fumarate. The sequence is that of Maleate isomerase from Alcaligenes faecalis.